A 504-amino-acid chain; its full sequence is Cytochrome P450 2D10 (504 aa).

Ser249 bears the Phosphoserine mark. Position 446 (Cys446) interacts with heme.

It belongs to the cytochrome P450 family. Requires heme as cofactor.

It localises to the endoplasmic reticulum membrane. The protein resides in the microsome membrane. It carries out the reaction an organic molecule + reduced [NADPH--hemoprotein reductase] + O2 = an alcohol + oxidized [NADPH--hemoprotein reductase] + H2O + H(+). Cytochromes P450 are a group of heme-thiolate monooxygenases. In liver microsomes, this enzyme is involved in an NADPH-dependent electron transport pathway. It oxidizes a variety of structurally unrelated compounds, including steroids, fatty acids, and xenobiotics. The sequence is that of Cytochrome P450 2D10 (Cyp2d10) from Mus musculus (Mouse).